The following is a 509-amino-acid chain: Flotillin-like protein FloT (509 aa).

Residues 1 to 3 (MTM) are Cytoplasmic-facing. The stretch at 4-24 (PIIMIIGVVFFLLIALIAVFI) is an intramembrane region. The Cytoplasmic portion of the chain corresponds to 25 to 509 (TKYRTAGPDE…KEAKTIQKSE (485 aa)). Residues 119–301 (AAEQFLGKSK…KIIERQKQIE (183 aa)) are PHB domain. The interval 203-509 (RIAQVKRDAD…KEAKTIQKSE (307 aa)) is required for correct localization. 4 consecutive short sequence motifs (EA repeat) follow at residues 342–344 (AEA), 357–360 (AEAE), 370–373 (AEAE), and 390–394 (AEAEA). Residues 485 to 509 (KGNVKQSINELTNEIKEAKTIQKSE) are not required for correct localization.

It belongs to the band 7/mec-2 family. Flotillin subfamily. In terms of assembly, homooligomerizes. Oligomerizes in very large complexes in vitro. Interacts with FloA, FtsH, FtsX, OppA, SdhA and SecY in detergent-resistant membrane (DRM) fractions. Interacts with FtsH at midcell. Interacts with FloA. Interacts in vivo with KinC, FloA, FtsH and ResE. Interacts with ResE, colocalizes with ResE in FloT-only membrane rafts. Another study shows nearly complete colocalization with NfeD2, but only minor colocalization with FtsH or KinC.

The protein localises to the cell membrane. The protein resides in the membrane raft. Found in functional membrane microdomains (FMM) that may be equivalent to eukaryotic membrane rafts. FMMs are highly dynamic and increase in number as cells age. FloA and FloT function is partially redundant; double deletions have marked synthetic phenotypes. Flotillins are thought to be important factors in membrane fluidity, especially during periods of rapid growth in rich media. Whether specific proteins are associated with FMMs is controversial; in one study FloT rafts have been shown to include proteins involved in adaptation to stationary phase, while FloA-FloT rafts include proteins involved in differentiation including sporulation, biofilm formation and DNA uptake competence. Another (more finely resolved) study only showed association of NfeD2 with FloT rafts of all the proteins examined. Aids homooligomerization of KinC and KinD but not KinB, may prevent incorrect hetero-association of the above kinases. Simultaneous overexpression of both FloA and FloT leads to defects in cell division and differentiation, in part caused by stabilization of FtsH and its subsequent increased ability to degrade proteins. Cells make more biofilm, are about half as long, have less EzrA and more frequent Z-rings. Involved in spatial organization of membranes, perhaps recruiting proteins (e.g. NfeD2) to specific membrane regions. Plays a role in phosphorylation of master regulator Spo0A, an early sporulation event. Plays a non-redundant role with dynamin-like protein A (dynA) in membrane dynamics and cell shape. This is Flotillin-like protein FloT from Bacillus subtilis (strain 168).